A 329-amino-acid polypeptide reads, in one-letter code: Malate dehydrogenase (329 aa).

12-18 (GAAGQIG) contributes to the NAD(+) binding site. Residues Arg95 and Arg101 each coordinate substrate. Residues Asn108, Gln115, and 132–134 (VGN) each bind NAD(+). Substrate is bound by residues Asn134 and Arg165. His190 (proton acceptor) is an active-site residue.

This sequence belongs to the LDH/MDH superfamily. MDH type 2 family.

It carries out the reaction (S)-malate + NAD(+) = oxaloacetate + NADH + H(+). Functionally, catalyzes the reversible oxidation of malate to oxaloacetate. The chain is Malate dehydrogenase from Polynucleobacter necessarius subsp. necessarius (strain STIR1).